Reading from the N-terminus, the 216-residue chain is Transmembrane protein 186 (216 aa).

The Mitochondrial matrix segment spans residues methionine 1–isoleucine 68. The interval glycine 31–glutamate 52 is disordered. Residues glycine 69–tyrosine 91 form a helical membrane-spanning segment. Over cysteine 92 to leucine 103 the chain is Mitochondrial intermembrane. A helical membrane pass occupies residues cysteine 104 to phenylalanine 124. At arginine 125–lysine 216 the chain is on the mitochondrial matrix side.

It belongs to the TMEM186 family. As to quaternary structure, part of the mitochondrial complex I assembly/MCIA complex that comprises at least the core subunits TMEM126B, NDUFAF1, ECSIT and ACAD9 and complement subunits such as COA1 and TMEM186. Interacts with MT-ND3.

The protein localises to the mitochondrion inner membrane. In terms of biological role, as part of the MCIA complex, required for efficient assembly of the mitochondrial complex I. In Mus musculus (Mouse), this protein is Transmembrane protein 186.